The chain runs to 325 residues: Prenytransferase adrG (325 aa).

The next 7 membrane-spanning stretches (helical) occupy residues 47 to 67 (LVGV…AVLL), 71 to 91 (MLLS…DDLI), 117 to 137 (ALLL…FLPW), 163 to 183 (PQIT…SLGL), 189 to 209 (MTPT…IDVI), 236 to 256 (LLSY…GVLT), and 258 to 278 (LGLP…WVLL).

This sequence belongs to the UbiA prenyltransferase family. Mg(2+) serves as cofactor.

The protein resides in the membrane. The enzyme catalyses 3,5-dimethylorsellinate + (2E,6E)-farnesyl diphosphate = (3R)-3-farnesyl-6-hydroxy-2,3,5-trimethyl-4-oxocyclohexa-1,5-diene-1-carboxylate + diphosphate + H(+). The protein operates within secondary metabolite biosynthesis; terpenoid biosynthesis. In terms of biological role, prenytransferase; part of the gene cluster that mediates the biosynthesis of andrastins, meroterpenoid compounds that exhibit inhibitory activity against ras farnesyltransferase, suggesting that they could be promising leads for antitumor agents. The first step of the pathway is the synthesis of 3,5-dimethylorsellinic acid (DMOA) by the polyketide synthase adrD via condensation of one acetyl-CoA starter unit with 3 malonyl-CoA units and 2 methylations. DMAO is then converted to farnesyl-DMAO by the prenyltransferase adrG. The methyltransferase adrK catalyzes the methylation of the carboxyl group of farnesyl-DMAO to farnesyl-DMAO methyl ester which is further converted to epoxyfarnesyl-DMAO methyl ester by the FAD-dependent monooxygenase adrH. The terpene cyclase adrI then catalyzes the carbon skeletal rearrangement to generate the andrastin E, the first compound in the pathway having the andrastin scaffold, with the tetracyclic ring system. The post-cyclization tailoring enzymes adrF, adrE, adrJ, and adrA, are involved in the conversion of andrastin E into andrastin A. The short chain dehydrogenase adrF is responsible for the oxidation of the C-3 a hydroxyl group of andrastin E to yield the corresponding ketone, andrastin D. The ketoreductase adrE stereoselectively reduces the carbonyl moiety to reverse the stereochemistry of the C-3 position to yield andrastin F. The acetyltransferase adrJ is the acetyltransferase that attaches the acetyl group to the C-3 hydroxyl group of andrastin F to yield andrastin C. Finally, the cytochrome P450 monooxygenase adrA catalyzes two sequential oxidation reactions of the C-23 methyl group, to generate the corresponding alcohol andrastin B, and aldehyde andrastin A. The protein is Prenytransferase adrG of Penicillium rubens (strain ATCC 28089 / DSM 1075 / NRRL 1951 / Wisconsin 54-1255) (Penicillium chrysogenum).